The primary structure comprises 105 residues: DNA-directed RNA polymerase subunit omega (105 aa).

This sequence belongs to the RNA polymerase subunit omega family. As to quaternary structure, the RNAP catalytic core consists of 2 alpha, 1 beta, 1 beta' and 1 omega subunit. When a sigma factor is associated with the core the holoenzyme is formed, which can initiate transcription.

The catalysed reaction is RNA(n) + a ribonucleoside 5'-triphosphate = RNA(n+1) + diphosphate. Its function is as follows. Promotes RNA polymerase assembly. Latches the N- and C-terminal regions of the beta' subunit thereby facilitating its interaction with the beta and alpha subunits. The sequence is that of DNA-directed RNA polymerase subunit omega from Streptococcus pyogenes serotype M12 (strain MGAS2096).